We begin with the raw amino-acid sequence, 613 residues long: Secretogranin-2 (613 aa).

A signal peptide spans 1–27 (MAEAKTHWLGAVLSLIPLIFLLSEAEA). Residues 28–30 (ASF) constitute a propeptide that is removed on maturation. Disordered stretches follow at residues 67 to 105 (QQAH…DSLS) and 119 to 146 (QAEN…PMDM). A compositionally biased stretch (basic and acidic residues) spans 92-105 (ENGDLPESSRDSLS). Tyr-150 carries the sulfotyrosine modification. 6 positions are modified to phosphoserine: Ser-173, Ser-267, Ser-428, Ser-528, Ser-551, and Ser-552. Basic and acidic residues predominate over residues 257 to 283 (ESQTQEEVRDSKENADKTEQINDEMKR). The segment at 257–287 (ESQTQEEVRDSKENADKTEQINDEMKRSGQL) is disordered. Basic and acidic residues predominate over residues 546–557 (HLSQHSSQETDK). The interval 546 to 580 (HLSQHSSQETDKLASVSKRLPVGTPKSDDTPNRPY) is disordered.

It belongs to the chromogranin/secretogranin protein family. In terms of assembly, interacts with Secretogranin III/SCG3. As to expression, highest levels detected in anterior pituitary followed by adrenal medulla and posterior pituitary (at protein level). In the brain, high levels are found in the hypothalamus, comparable to those present in posterior pituitary with two- to six-fold lower levels present in the other brain regions investigated including caudate nucleus, hippocampus, thalamus and brainstem (at protein level).

The protein resides in the secreted. Its function is as follows. Neuroendocrine protein of the granin family that regulates the biogenesis of secretory granules. The sequence is that of Secretogranin-2 (SCG2) from Bos taurus (Bovine).